A 104-amino-acid chain; its full sequence is Antitoxin HigA-2 (104 aa).

In terms of domain architecture, HTH cro/C1-type spans 45–98 (IVSIREQFNMSRGVFARLLHTSSRTLENWEQGRSVPNGQAVTLLKLVQRHPETL). A DNA-binding region (H-T-H motif) is located at residues 56–75 (RGVFARLLHTSSRTLENWEQ).

Its function is as follows. Antitoxin component of a type II toxin-antitoxin (TA) system that counteracts the effect of the HigB-2 toxin. Binds to its own promoter and regulates transcription of the higB-2/higA-2 operon. The protein is Antitoxin HigA-2 (higA-2) of Vibrio cholerae serotype O1 (strain ATCC 39315 / El Tor Inaba N16961).